A 314-amino-acid polypeptide reads, in one-letter code: MAKGIMLHEVGEQVDQYLLIKSSTKGIASNGKPFLTLMLQDQSGDIEAKLWDAKQSDEVTYAPQTIVKVVGDVHHYRGRTQLKLRNIRPVSEQENVNIDDFLETAPIPKNEMMDTITQYIFEMKNPNIQRITRFLVKKHEAEFMDYPAATKNHHEFVSGLAYHVVSMLNLAKAIADLYPSLDRDLLYAGVILHDLGKVKELSGPVSTSYTVEGNLLGHISIMVTELSKAAEELQIDSEEVLILQHLILSHHGKAEWGSPKPPMVKEAEILHYIDNLDAKMNMMDRALERVKPGEYTERVFALENRSFYKPTFHK.

Residues 22-90 constitute a DNA-binding region (OB); that stretch reads SSTKGIASNG…QLKLRNIRPV (69 aa). In terms of domain architecture, HD spans 163–279; it reads HVVSMLNLAK…LHYIDNLDAK (117 aa).

This sequence belongs to the YhaM family. The cofactor is Mn(2+). It depends on Co(2+) as a cofactor.

Its function is as follows. Shows a 3'-5' exoribonuclease activity as well as single-stranded DNA 3'-5'exonuclease activity. Plays a role in the secondary pathway of 23S rRNA 3' end maturation. The protein is 3'-5' exoribonuclease YhaM of Bacillus subtilis (strain 168).